The sequence spans 796 residues: Cation/H(+) antiporter 6B (796 aa).

13 consecutive transmembrane segments (helical) span residues 54-74 (DFWE…FLLW), 93-113 (SMML…IPCL), 131-151 (IGAF…DVGI), 159-179 (SVVI…LLYS), 194-213 (YTVM…NMLL), 223-243 (FGQI…FLTV), 259-279 (LAFM…LWVI), 285-305 (GAPV…LSYL), 310-330 (FLFF…NGPP), 344-364 (EGIF…WSFL), 382-402 (FSFL…AALA), 411-431 (IILG…VLTA), and 444-464 (LLGV…HFLY).

It belongs to the monovalent cation:proton antiporter 2 (CPA2) transporter (TC 2.A.37) family. CHX (TC 2.A.37.4) subfamily. Preferentially expressed in pollen.

Its subcellular location is the membrane. Its function is as follows. May operate as a cation/H(+) antiporter. The protein is Cation/H(+) antiporter 6B (CHX6b) of Arabidopsis thaliana (Mouse-ear cress).